The following is a 430-amino-acid chain: Serine carboxypeptidase-like 13 (430 aa).

The signal sequence occupies residues 1–22 (MSLTLEFLLLLIVLILSHHAHS). 3 disulfide bridges follow: cysteine 81–cysteine 319, cysteine 240–cysteine 254, and cysteine 278–cysteine 285. Residue asparagine 102 is glycosylated (N-linked (GlcNAc...) asparagine). The active site involves serine 177. N-linked (GlcNAc...) asparagine glycosylation is found at asparagine 299 and asparagine 323. Aspartate 355 is a catalytic residue. Asparagine 371 carries an N-linked (GlcNAc...) asparagine glycan. The active site involves histidine 408.

It belongs to the peptidase S10 family. Expression not detected.

The protein localises to the secreted. It catalyses the reaction 2 1-O-(trans-sinapoyl)-beta-D-glucose = 1,2-di-O-sinapoyl beta-D-glucose + D-glucose. Catalyzes the formation of 1,2-bis-O-sinapoyl beta-D-glucoside. The chain is Serine carboxypeptidase-like 13 (SCPL13) from Arabidopsis thaliana (Mouse-ear cress).